Consider the following 149-residue polypeptide: NPC intracellular cholesterol transporter 2 (149 aa).

The signal sequence occupies residues Met-1–Ala-21. 3 disulfides stabilise this stretch: Cys-27–Cys-140, Cys-42–Cys-47, and Cys-93–Cys-99. N-linked (GlcNAc...) asparagine glycosylation is present at Asn-58. Lys-116 carries the N6-acetyllysine modification.

Belongs to the NPC2 family. In terms of assembly, interacts with NPC1 (via the second lumenal domain) in a cholestrol-dependent manner. Interacts with NUS1/NgBR, the interaction stabilizes NCP2 and regulates cholesterol trafficking. Interacts with DHDDS. Interacts with NEDD4L (via C2 domain). Interacts with NPC1L1. In terms of tissue distribution, epididymis. High levels are found in the caput and corpus regions. Weaker levels in the distal cauda and in the efferent ducts.

The protein localises to the secreted. It localises to the endoplasmic reticulum. It is found in the lysosome. The enzyme catalyses cholesterol(in) = cholesterol(out). Functionally, intracellular cholesterol transporter which acts in concert with NPC1 and plays an important role in the egress of cholesterol from the lysosomal compartment. Unesterified cholesterol that has been released from LDLs in the lumen of the late endosomes/lysosomes is transferred by NPC2 to the cholesterol-binding pocket in the N-terminal domain of NPC1. May bind and mobilize cholesterol that is associated with membranes. NPC2 binds cholesterol with a 1:1 stoichiometry. Can bind a variety of sterols, including lathosterol, desmosterol and the plant sterols stigmasterol and beta-sitosterol. The secreted form of NCP2 regulates biliary cholesterol secretion via stimulation of ABCG5/ABCG8-mediated cholesterol transport. The polypeptide is NPC intracellular cholesterol transporter 2 (Canis lupus familiaris (Dog)).